Reading from the N-terminus, the 795-residue chain is Phenylalanine--tRNA ligase beta subunit (795 aa).

Residues 39–148 form the tRNA-binding domain; it reads AGTFNGVKVG…IDAPIGMDFR (110 aa). The 76-residue stretch at 401-476 folds into the B5 domain; that stretch reads PKPNKVALRR…RIYGYDNIPN (76 aa). Residues Asp454, Asp460, Glu463, and Glu464 each contribute to the Mg(2+) site. Residues 701 to 794 enclose the FDX-ACB domain; that stretch reads SKFPANRRDI…VSEKFGASLR (94 aa).

The protein belongs to the phenylalanyl-tRNA synthetase beta subunit family. Type 1 subfamily. As to quaternary structure, tetramer of two alpha and two beta subunits. Requires Mg(2+) as cofactor.

The protein resides in the cytoplasm. It catalyses the reaction tRNA(Phe) + L-phenylalanine + ATP = L-phenylalanyl-tRNA(Phe) + AMP + diphosphate + H(+). The polypeptide is Phenylalanine--tRNA ligase beta subunit (Vibrio vulnificus (strain YJ016)).